Here is a 264-residue protein sequence, read N- to C-terminus: Thymidylate synthase (264 aa).

Residue arginine 21 coordinates dUMP. Position 51 (histidine 51) interacts with (6R)-5,10-methylene-5,6,7,8-tetrahydrofolate. 126-127 (RR) is a dUMP binding site. Catalysis depends on cysteine 146, which acts as the Nucleophile. DUMP is bound by residues 166–169 (RSAD), asparagine 177, and 207–209 (HIY). (6R)-5,10-methylene-5,6,7,8-tetrahydrofolate is bound at residue aspartate 169. Alanine 263 contributes to the (6R)-5,10-methylene-5,6,7,8-tetrahydrofolate binding site.

It belongs to the thymidylate synthase family. Bacterial-type ThyA subfamily. Homodimer.

Its subcellular location is the cytoplasm. It carries out the reaction dUMP + (6R)-5,10-methylene-5,6,7,8-tetrahydrofolate = 7,8-dihydrofolate + dTMP. It participates in pyrimidine metabolism; dTTP biosynthesis. Catalyzes the reductive methylation of 2'-deoxyuridine-5'-monophosphate (dUMP) to 2'-deoxythymidine-5'-monophosphate (dTMP) while utilizing 5,10-methylenetetrahydrofolate (mTHF) as the methyl donor and reductant in the reaction, yielding dihydrofolate (DHF) as a by-product. This enzymatic reaction provides an intracellular de novo source of dTMP, an essential precursor for DNA biosynthesis. The chain is Thymidylate synthase from Brucella anthropi (strain ATCC 49188 / DSM 6882 / CCUG 24695 / JCM 21032 / LMG 3331 / NBRC 15819 / NCTC 12168 / Alc 37) (Ochrobactrum anthropi).